Consider the following 202-residue polypeptide: Glycerol-3-phosphate acyltransferase (202 aa).

4 helical membrane passes run 2–22 (ANLL…AVVV), 85–105 (LAMV…HRFA), 119–139 (AINP…AFFF), and 158–178 (VLME…ILLI).

This sequence belongs to the PlsY family. Probably interacts with PlsX.

It localises to the cell inner membrane. The catalysed reaction is an acyl phosphate + sn-glycerol 3-phosphate = a 1-acyl-sn-glycero-3-phosphate + phosphate. The protein operates within lipid metabolism; phospholipid metabolism. In terms of biological role, catalyzes the transfer of an acyl group from acyl-phosphate (acyl-PO(4)) to glycerol-3-phosphate (G3P) to form lysophosphatidic acid (LPA). This enzyme utilizes acyl-phosphate as fatty acyl donor, but not acyl-CoA or acyl-ACP. In Cupriavidus pinatubonensis (strain JMP 134 / LMG 1197) (Cupriavidus necator (strain JMP 134)), this protein is Glycerol-3-phosphate acyltransferase.